The sequence spans 647 residues: DNA ligase (647 aa).

Residues 30 to 34, 79 to 80, and Glu-105 contribute to the NAD(+) site; these read DEEYD and SM. The N6-AMP-lysine intermediate role is filled by Lys-107. Residues Arg-128, Glu-162, and Lys-301 each coordinate NAD(+). The Zn(2+) site is built by Cys-395, Cys-398, Cys-411, and Cys-416. The region spanning 570–647 is the BRCT domain; sequence KSDSVIFGKT…ESAFNELVKE (78 aa).

Belongs to the NAD-dependent DNA ligase family. LigA subfamily. It depends on Mg(2+) as a cofactor. Requires Mn(2+) as cofactor.

The enzyme catalyses NAD(+) + (deoxyribonucleotide)n-3'-hydroxyl + 5'-phospho-(deoxyribonucleotide)m = (deoxyribonucleotide)n+m + AMP + beta-nicotinamide D-nucleotide.. Its function is as follows. DNA ligase that catalyzes the formation of phosphodiester linkages between 5'-phosphoryl and 3'-hydroxyl groups in double-stranded DNA using NAD as a coenzyme and as the energy source for the reaction. It is essential for DNA replication and repair of damaged DNA. This Campylobacter jejuni subsp. doylei (strain ATCC BAA-1458 / RM4099 / 269.97) protein is DNA ligase.